The chain runs to 210 residues: Primase-associated factor LEF-2 (210 aa).

Belongs to the baculoviridae LEF-2 family. In terms of assembly, interacts with the DNA primase.

It is found in the virion. The protein localises to the host nucleus. It localises to the host cytoplasm. In terms of biological role, plays an essential role in viral DNA replication. Does not seem to participate in the initiation step but is rather important for the amplification of DNA. Also required for expression from the vp39 and polh promoters. The sequence is that of Primase-associated factor LEF-2 (LEF-2) from Autographa californica nuclear polyhedrosis virus (AcMNPV).